A 170-amino-acid polypeptide reads, in one-letter code: Myosin regulatory light chain 11 (170 aa).

Ala2 bears the N,N,N-trimethylalanine mark. Residues Ser16 and Ser17 each carry the phosphoserine modification. Phosphothreonine is present on residues Thr26 and Thr36. In terms of domain architecture, EF-hand 1 spans 26–61; sequence TQIQEFKEAFTVIDQNRDGIIDKEDLRDTFAAMGRL. 4 residues coordinate Ca(2+): Asp39, Asn41, Asp43, and Asp50. Phosphoserine is present on Ser76. EF-hand domains are found at residues 96–131 and 132–167; these read DPED…QCDR and FSQE…GDAK. Thr102 bears the Phosphothreonine mark.

As to quaternary structure, myosin is a hexamer of 2 heavy chains and 4 light chains. N,N,N-trimethylalanine found in this myosin light chain would not have been detected in the N-terminal tryptic peptide in PubMed:863872 and PubMed:352892 because it would remain trimethylated and ninhydrin negative after hydrolysis.

Myosin regulatory subunit that plays an essential role to maintain muscle integrity during early development. Plays a role in muscle contraction. The polypeptide is Myosin regulatory light chain 11 (MYL11) (Oryctolagus cuniculus (Rabbit)).